The primary structure comprises 295 residues: Light-independent protochlorophyllide reductase iron-sulfur ATP-binding protein (295 aa).

Residues 39–44 (GIGKST) and lysine 68 contribute to the ATP site. Residue serine 43 coordinates Mg(2+). The [4Fe-4S] cluster site is built by cysteine 124 and cysteine 158. ATP is bound at residue 209–210 (NR).

It belongs to the NifH/BchL/ChlL family. As to quaternary structure, homodimer. Protochlorophyllide reductase is composed of three subunits; ChlL, ChlN and ChlB. Requires [4Fe-4S] cluster as cofactor.

The catalysed reaction is chlorophyllide a + oxidized 2[4Fe-4S]-[ferredoxin] + 2 ADP + 2 phosphate = protochlorophyllide a + reduced 2[4Fe-4S]-[ferredoxin] + 2 ATP + 2 H2O. The protein operates within porphyrin-containing compound metabolism; chlorophyll biosynthesis (light-independent). In terms of biological role, component of the dark-operative protochlorophyllide reductase (DPOR) that uses Mg-ATP and reduced ferredoxin to reduce ring D of protochlorophyllide (Pchlide) to form chlorophyllide a (Chlide). This reaction is light-independent. The L component serves as a unique electron donor to the NB-component of the complex, and binds Mg-ATP. In Prochlorococcus marinus (strain MIT 9515), this protein is Light-independent protochlorophyllide reductase iron-sulfur ATP-binding protein.